The primary structure comprises 163 residues: Phosphopantetheine adenylyltransferase (163 aa).

S9 is a substrate binding site. ATP is bound by residues 9–10 (SF) and H17. Substrate is bound by residues K41, I75, and R89. Residues 90 to 92 (GIR), E100, and 125 to 131 (HLYVRSD) each bind ATP.

This sequence belongs to the bacterial CoaD family. As to quaternary structure, homohexamer. The cofactor is Mg(2+).

The protein localises to the cytoplasm. The enzyme catalyses (R)-4'-phosphopantetheine + ATP + H(+) = 3'-dephospho-CoA + diphosphate. It functions in the pathway cofactor biosynthesis; coenzyme A biosynthesis; CoA from (R)-pantothenate: step 4/5. Its function is as follows. Reversibly transfers an adenylyl group from ATP to 4'-phosphopantetheine, yielding dephospho-CoA (dPCoA) and pyrophosphate. The polypeptide is Phosphopantetheine adenylyltransferase (Borrelia garinii subsp. bavariensis (strain ATCC BAA-2496 / DSM 23469 / PBi) (Borreliella bavariensis)).